The following is a 423-amino-acid chain: MITWPAPQVPSIPGALTSVRVMDTSSGQLVETVRPGVGESSMYVCGITPYDATHIGHAATYIAFDLLYRAWLDAGQRVVYTSNVTDVDDPLLERATATGVDWTELATSQITLFFDDMSALGVLPPHTYLSAVESVPMVISATRHLLESGRAYRVPVPAQERPVHSPAYDIYADVTSDPDFGSISGYTSEERVRLFTDRGGDPATPGKKNPIDPIMWKAQREGEPGWDGDDLGWGRPGWHIECTTIAHCGIGRSCTVQGGGSDLIFPHHEMSSAHARALFGQDAGASVHAHAGLIAYQGEKMSKSKGNLVFVSRLRQEGVDPMAIRLAILANHYRDEWEWTSDVLDAGIKRHQLWLQAMSTNGGPHPGATLAAMREALSNDLDAPRALDAVDAWAYATLAGNDEDPGAPGVVSRAVNALLGIRL.

Cys45 is a Zn(2+) binding site. L-cysteinyl-5'-AMP contacts are provided by residues 45–48 (CGIT), Thr60, and 83–85 (NVT). The 'HIGH' region motif lies at 47-57 (ITPYDATHIGH). Positions 197–202 (DRGGDP) match the 'ERGGDP' region motif. Residue Trp238 participates in L-cysteinyl-5'-AMP binding. Cys242 contributes to the Zn(2+) binding site. 260–262 (GSD) contributes to the L-cysteinyl-5'-AMP binding site. His267 contributes to the Zn(2+) binding site. Ile294 lines the L-cysteinyl-5'-AMP pocket. Positions 300-304 (KMSKS) match the 'KMSKS' region motif.

This sequence belongs to the class-I aminoacyl-tRNA synthetase family. MshC subfamily. In terms of assembly, monomer. The cofactor is Zn(2+).

It catalyses the reaction 1D-myo-inositol 2-amino-2-deoxy-alpha-D-glucopyranoside + L-cysteine + ATP = 1D-myo-inositol 2-(L-cysteinylamino)-2-deoxy-alpha-D-glucopyranoside + AMP + diphosphate + H(+). Functionally, catalyzes the ATP-dependent condensation of GlcN-Ins and L-cysteine to form L-Cys-GlcN-Ins. The sequence is that of L-cysteine:1D-myo-inositol 2-amino-2-deoxy-alpha-D-glucopyranoside ligase from Jonesia denitrificans (strain ATCC 14870 / DSM 20603 / BCRC 15368 / CIP 55.134 / JCM 11481 / NBRC 15587 / NCTC 10816 / Prevot 55134) (Listeria denitrificans).